The chain runs to 301 residues: Probable alpha-L-glutamate ligase (301 aa).

The region spanning 104–287 (LQLLSRKGIG…IAGLIVAYME (184 aa)) is the ATP-grasp domain. ATP contacts are provided by residues Lys141, 178-179 (EF), Asp187, and 211-213 (RSN). Asp248, Glu260, and Asn262 together coordinate Mg(2+). Positions 248, 260, and 262 each coordinate Mn(2+).

It belongs to the RimK family. Mg(2+) is required as a cofactor. It depends on Mn(2+) as a cofactor.

The sequence is that of Probable alpha-L-glutamate ligase from Cellvibrio japonicus (strain Ueda107) (Pseudomonas fluorescens subsp. cellulosa).